The chain runs to 300 residues: Protein SPEAR2 (300 aa).

Polar residues predominate over residues 1 to 11; the sequence is MCSNNNTSSGS. The segment at 1-64 is disordered; it reads MCSNNNTSSG…PPLSSSPSLP (64 aa). Over residues 25–38 the composition is skewed to basic residues; it reads CRKKQKKDKVRRRG. The short motif at 37–45 is the SPL element; the sequence is RGPGVAELE. Residues 43 to 54 show a composition bias toward basic and acidic residues; sequence ELEKIRLQEEYK. Over residues 55–64 the composition is skewed to low complexity; sequence PPLSSSPSLP. The EAR signature appears at 294 to 300; it reads IDLNLKL.

In terms of assembly, homodimer and heterodimer with SPL and SPEARs. Interacts with SPL, SPEAR1, SPEAR3 and SPEAR4. As to expression, expressed in leaves.

Functionally, adapter-like transcriptional repressor recruiting TPL/TPR corepressors to inhibit TCP transcription factors. May be involved in leaf development. The protein is Protein SPEAR2 of Arabidopsis thaliana (Mouse-ear cress).